The chain runs to 304 residues: 17-beta-hydroxysteroid dehydrogenase 13 (304 aa).

The first 19 residues, 1 to 19 (MNLILEFLLLVGVIIYSYL), serve as a signal peptide directing secretion. Serine 33 bears the Phosphoserine mark. 40-67 (LITGAGHGIGRLTAYEFAKQKSRLVLWD) serves as a coordination point for NAD(+). Lysine 79 is subject to N6-acetyllysine. Serine 172 is a substrate binding site. The active-site Proton acceptor is tyrosine 185. Residue lysine 189 participates in NAD(+) binding. Positions 276–304 (SSKHPHGGSQQPVTPIPGDLTPSSDFLKH) are disordered.

Belongs to the short-chain dehydrogenases/reductases (SDR) family. In terms of tissue distribution, expressed predominantly in the liver (at protein level).

The protein localises to the lipid droplet. It localises to the endoplasmic reticulum. The catalysed reaction is 17beta-estradiol + NAD(+) = estrone + NADH + H(+). It catalyses the reaction all-trans-retinol + NAD(+) = all-trans-retinal + NADH + H(+). It carries out the reaction all-trans-retinal + NAD(+) + H2O = all-trans-retinoate + NADH + 2 H(+). Functionally, plays a pivotal role in hepatic lipid metabolism. In vitro, it catalyzes the oxidation of a variety of lipid substrates, including 17beta-estradiol, retinol, retinal, and leukotriene B4. The polypeptide is 17-beta-hydroxysteroid dehydrogenase 13 (Hsd17b13) (Mus musculus (Mouse)).